Here is a 119-residue protein sequence, read N- to C-terminus: Large ribosomal subunit protein bL20 (119 aa).

This sequence belongs to the bacterial ribosomal protein bL20 family.

In terms of biological role, binds directly to 23S ribosomal RNA and is necessary for the in vitro assembly process of the 50S ribosomal subunit. It is not involved in the protein synthesizing functions of that subunit. This Xylella fastidiosa (strain M23) protein is Large ribosomal subunit protein bL20.